The following is a 621-amino-acid chain: 1-deoxy-D-xylulose-5-phosphate synthase (621 aa).

Residues His76 and 117-119 each bind thiamine diphosphate; that span reads AHS. Asp148 contacts Mg(2+). Thiamine diphosphate-binding positions include 149 to 150, Asn178, Tyr285, and Glu367; that span reads GA. Asn178 contacts Mg(2+).

The protein belongs to the transketolase family. DXPS subfamily. As to quaternary structure, homodimer. Mg(2+) is required as a cofactor. Requires thiamine diphosphate as cofactor.

The catalysed reaction is D-glyceraldehyde 3-phosphate + pyruvate + H(+) = 1-deoxy-D-xylulose 5-phosphate + CO2. Its pathway is metabolic intermediate biosynthesis; 1-deoxy-D-xylulose 5-phosphate biosynthesis; 1-deoxy-D-xylulose 5-phosphate from D-glyceraldehyde 3-phosphate and pyruvate: step 1/1. In terms of biological role, catalyzes the acyloin condensation reaction between C atoms 2 and 3 of pyruvate and glyceraldehyde 3-phosphate to yield 1-deoxy-D-xylulose-5-phosphate (DXP). The chain is 1-deoxy-D-xylulose-5-phosphate synthase from Aromatoleum aromaticum (strain DSM 19018 / LMG 30748 / EbN1) (Azoarcus sp. (strain EbN1)).